We begin with the raw amino-acid sequence, 484 residues long: Chromosomal replication initiator protein DnaA (484 aa).

A domain I, interacts with DnaA modulators region spans residues 1 to 83; that stretch reads MQPPSQDWAS…LAWRTVWPGI (83 aa). Residues 83-146 form a domain II region; sequence IAEVKVSVRN…EKKAEGEDQN (64 aa). A disordered region spans residues 110–146; that stretch reads GDQPRPLPKKPAKKKQSVPATPKSTSPEKKAEGEDQN. Residues 116-125 are compositionally biased toward basic residues; sequence LPKKPAKKKQ. Residues 135–146 are compositionally biased toward basic and acidic residues; the sequence is SPEKKAEGEDQN. Residues 147–364 are domain III, AAA+ region; it reads QFEERYNFDN…GALNRVVAYA (218 aa). ATP-binding residues include Gly-191, Gly-193, Lys-194, and Thr-195. The tract at residues 365–484 is domain IV, binds dsDNA; that stretch reads TLSNRPINMD…VRLLMRQFEG (120 aa).

The protein belongs to the DnaA family. Oligomerizes as a right-handed, spiral filament on DNA at oriC.

The protein resides in the cytoplasm. Functionally, plays an essential role in the initiation and regulation of chromosomal replication. ATP-DnaA binds to the origin of replication (oriC) to initiate formation of the DNA replication initiation complex once per cell cycle. Binds the DnaA box (a 9 base pair repeat at the origin) and separates the double-stranded (ds)DNA. Forms a right-handed helical filament on oriC DNA; dsDNA binds to the exterior of the filament while single-stranded (ss)DNA is stabiized in the filament's interior. The ATP-DnaA-oriC complex binds and stabilizes one strand of the AT-rich DNA unwinding element (DUE), permitting loading of DNA polymerase. After initiation quickly degrades to an ADP-DnaA complex that is not apt for DNA replication. Binds acidic phospholipids. This chain is Chromosomal replication initiator protein DnaA, found in Zymomonas mobilis subsp. mobilis (strain ATCC 31821 / ZM4 / CP4).